Reading from the N-terminus, the 233-residue chain is MKIKAISIDIDGTITYPNRMIHEKALEAIRKAESLGIPVMLVTGNTVQFAEAASILIGTSGPVVAEDGGAISYRKKRIFLANMDEEWILWNEIRKRFPNARTSHTMPDRRAGLVIMRETIDVETVRKIIHELGLNLVAVDSGFAIHVKKPWINKGAGIEKACELLGIKPREVAHIGDGENDLDAFKVVGYRIAIAQAPDVLKENADYVTEKEYGEGGAEAIFHVLRVSGYMDF.

Aspartate 9 acts as the Nucleophile in catalysis. Residues aspartate 9 and aspartate 11 each contribute to the Mg(2+) site. Lysine 154 is a binding site for substrate. Mg(2+)-binding residues include aspartate 177 and aspartate 181.

The protein belongs to the archaeal SPP-like hydrolase family. Requires Mg(2+) as cofactor.

The enzyme catalyses 2-phosphoglycolate + H2O = glycolate + phosphate. Catalyzes the dephosphorylation of 2-phosphoglycolate. In Pyrococcus abyssi (strain GE5 / Orsay), this protein is Phosphoglycolate phosphatase.